Here is a 112-residue protein sequence, read N- to C-terminus: Probable 4-amino-4-deoxy-L-arabinose-phosphoundecaprenol flippase subunit ArnE (112 aa).

The 76-residue stretch at 35–110 (RHILFWLGMA…IVVGIVILGT (76 aa)) folds into the EamA domain. 3 helical membrane passes run 37–57 (ILFW…LWLS), 66–86 (IAYP…WGIW), and 89–109 (PVAR…VILG).

This sequence belongs to the ArnE family. Heterodimer of ArnE and ArnF.

Its subcellular location is the cell inner membrane. It functions in the pathway bacterial outer membrane biogenesis; lipopolysaccharide biosynthesis. Translocates 4-amino-4-deoxy-L-arabinose-phosphoundecaprenol (alpha-L-Ara4N-phosphoundecaprenol) from the cytoplasmic to the periplasmic side of the inner membrane. This Klebsiella pneumoniae (strain 342) protein is Probable 4-amino-4-deoxy-L-arabinose-phosphoundecaprenol flippase subunit ArnE.